The chain runs to 221 residues: Adenylate kinase (221 aa).

ATP is bound at residue 10 to 15 (GAGKGT). The NMP stretch occupies residues 30–59 (STGDMLRAAVKAGTEFGVAAKKIMDAGGLV). Residues Thr-31, Arg-36, 57 to 59 (GLV), 85 to 88 (GFPR), and Gln-92 each bind AMP. The segment at 122-159 (GRRVHPASGRTYHIKYNPPKVEGKDDVTGDALIQRDDD) is LID. ATP contacts are provided by residues Arg-123 and 132–133 (TY). Residues Arg-156 and Arg-167 each contribute to the AMP site. Gly-207 serves as a coordination point for ATP.

The protein belongs to the adenylate kinase family. Monomer.

The protein localises to the cytoplasm. It carries out the reaction AMP + ATP = 2 ADP. It functions in the pathway purine metabolism; AMP biosynthesis via salvage pathway; AMP from ADP: step 1/1. Catalyzes the reversible transfer of the terminal phosphate group between ATP and AMP. Plays an important role in cellular energy homeostasis and in adenine nucleotide metabolism. This is Adenylate kinase from Polynucleobacter asymbioticus (strain DSM 18221 / CIP 109841 / QLW-P1DMWA-1) (Polynucleobacter necessarius subsp. asymbioticus).